We begin with the raw amino-acid sequence, 150 residues long: D-aminoacyl-tRNA deacylase (150 aa).

The short motif at 138-139 (GP) is the Gly-cisPro motif, important for rejection of L-amino acids element.

The protein belongs to the DTD family. Homodimer.

It localises to the cytoplasm. It carries out the reaction glycyl-tRNA(Ala) + H2O = tRNA(Ala) + glycine + H(+). The enzyme catalyses a D-aminoacyl-tRNA + H2O = a tRNA + a D-alpha-amino acid + H(+). An aminoacyl-tRNA editing enzyme that deacylates mischarged D-aminoacyl-tRNAs. Also deacylates mischarged glycyl-tRNA(Ala), protecting cells against glycine mischarging by AlaRS. Acts via tRNA-based rather than protein-based catalysis; rejects L-amino acids rather than detecting D-amino acids in the active site. By recycling D-aminoacyl-tRNA to D-amino acids and free tRNA molecules, this enzyme counteracts the toxicity associated with the formation of D-aminoacyl-tRNA entities in vivo and helps enforce protein L-homochirality. In Chlorobium limicola (strain DSM 245 / NBRC 103803 / 6330), this protein is D-aminoacyl-tRNA deacylase.